We begin with the raw amino-acid sequence, 397 residues long: 3-ketoacyl-CoA thiolase, mitochondrial (397 aa).

A mitochondrion; not cleaved-targeting transit peptide spans 1 to 16 (MALLRGVFVVAAKRTP). Lys25 bears the N6-acetyllysine; alternate mark. Position 25 is an N6-succinyllysine; alternate (Lys25). Lys45 bears the N6-succinyllysine mark. The Acyl-thioester intermediate role is filled by Cys92. Thr119 bears the Phosphothreonine mark. Phosphoserine is present on Ser121. Tyr127 bears the Phosphotyrosine mark. Thr136 is subject to Phosphothreonine. N6-acetyllysine; alternate is present on Lys137. Lys137 is subject to N6-succinyllysine; alternate. A Phosphoserine modification is found at Ser140. An N6-acetyllysine; alternate mark is found at Lys143, Lys171, Lys191, and Lys209. N6-succinyllysine; alternate occurs at positions 143, 171, 191, and 209. N6-succinyllysine occurs at positions 211, 212, and 214. Residues Arg224 and Thr227 each coordinate CoA. Lys234 is modified (N6-acetyllysine; alternate). N6-succinyllysine; alternate is present on Lys234. The residue at position 240 (Lys240) is an N6-succinyllysine. Lys241 is subject to N6-acetyllysine. Ser251 is a binding site for CoA. N6-acetyllysine is present on residues Lys269 and Lys270. Lys305 carries the post-translational modification N6-acetyllysine; alternate. Position 305 is an N6-succinyllysine; alternate (Lys305). At Ser310 the chain carries Phosphoserine. At Lys312 the chain carries N6-acetyllysine; alternate. The residue at position 312 (Lys312) is an N6-succinyllysine; alternate. Ser333 is subject to Phosphoserine. 2 positions are modified to N6-acetyllysine: Lys340 and Lys375. Cys382 (proton donor/acceptor) is an active-site residue.

Belongs to the thiolase-like superfamily. Thiolase family. As to quaternary structure, homotetramer. Interacts with BNIP3.

The protein localises to the mitochondrion. The enzyme catalyses an acyl-CoA + acetyl-CoA = a 3-oxoacyl-CoA + CoA. It carries out the reaction 2 acetyl-CoA = acetoacetyl-CoA + CoA. It catalyses the reaction acetyl-CoA + H2O = acetate + CoA + H(+). The catalysed reaction is propanoyl-CoA + H2O = propanoate + CoA + H(+). The enzyme catalyses butanoyl-CoA + H2O = butanoate + CoA + H(+). It carries out the reaction hexanoyl-CoA + H2O = hexanoate + CoA + H(+). It catalyses the reaction octanoyl-CoA + H2O = octanoate + CoA + H(+). The catalysed reaction is decanoyl-CoA + H2O = decanoate + CoA + H(+). The enzyme catalyses dodecanoyl-CoA + H2O = dodecanoate + CoA + H(+). It carries out the reaction tetradecanoyl-CoA + H2O = tetradecanoate + CoA + H(+). It catalyses the reaction hexadecanoyl-CoA + H2O = hexadecanoate + CoA + H(+). It functions in the pathway lipid metabolism; fatty acid beta-oxidation. In the production of energy from fats, this is one of the enzymes that catalyzes the last step of the mitochondrial beta-oxidation pathway, an aerobic process breaking down fatty acids into acetyl-CoA. Using free coenzyme A/CoA, catalyzes the thiolytic cleavage of medium- to long-chain unbranched 3-oxoacyl-CoAs into acetyl-CoA and a fatty acyl-CoA shortened by two carbon atoms. Also catalyzes the condensation of two acetyl-CoA molecules into acetoacetyl-CoA and could be involved in the production of ketone bodies. Also displays hydrolase activity on various fatty acyl-CoAs. Thereby, could be responsible for the production of acetate in a side reaction to beta-oxidation. Abolishes BNIP3-mediated apoptosis and mitochondrial damage. The protein is 3-ketoacyl-CoA thiolase, mitochondrial (ACAA2) of Homo sapiens (Human).